The sequence spans 232 residues: 5'-methylthioadenosine/S-adenosylhomocysteine nucleosidase (232 aa).

Glutamate 14 acts as the Proton acceptor in catalysis. Substrate-binding positions include glycine 80, valine 154, and 175 to 176 (ME). The Proton donor role is filled by aspartate 199.

Belongs to the PNP/UDP phosphorylase family. MtnN subfamily.

The enzyme catalyses S-adenosyl-L-homocysteine + H2O = S-(5-deoxy-D-ribos-5-yl)-L-homocysteine + adenine. It catalyses the reaction S-methyl-5'-thioadenosine + H2O = 5-(methylsulfanyl)-D-ribose + adenine. The catalysed reaction is 5'-deoxyadenosine + H2O = 5-deoxy-D-ribose + adenine. It functions in the pathway amino-acid biosynthesis; L-methionine biosynthesis via salvage pathway; S-methyl-5-thio-alpha-D-ribose 1-phosphate from S-methyl-5'-thioadenosine (hydrolase route): step 1/2. Functionally, catalyzes the irreversible cleavage of the glycosidic bond in both 5'-methylthioadenosine (MTA) and S-adenosylhomocysteine (SAH/AdoHcy) to adenine and the corresponding thioribose, 5'-methylthioribose and S-ribosylhomocysteine, respectively. Also cleaves 5'-deoxyadenosine, a toxic by-product of radical S-adenosylmethionine (SAM) enzymes, into 5-deoxyribose and adenine. The chain is 5'-methylthioadenosine/S-adenosylhomocysteine nucleosidase from Actinobacillus pleuropneumoniae serotype 5b (strain L20).